Here is a 147-residue protein sequence, read N- to C-terminus: Large ribosomal subunit protein uL13 (147 aa).

This sequence belongs to the universal ribosomal protein uL13 family. In terms of assembly, part of the 50S ribosomal subunit.

In terms of biological role, this protein is one of the early assembly proteins of the 50S ribosomal subunit, although it is not seen to bind rRNA by itself. It is important during the early stages of 50S assembly. This chain is Large ribosomal subunit protein uL13, found in Arthrobacter sp. (strain FB24).